Consider the following 322-residue polypeptide: Pantothenate kinase (322 aa).

104–111 serves as a coordination point for ATP; the sequence is GSVAVGKS.

The protein belongs to the prokaryotic pantothenate kinase family.

It localises to the cytoplasm. It carries out the reaction (R)-pantothenate + ATP = (R)-4'-phosphopantothenate + ADP + H(+). The protein operates within cofactor biosynthesis; coenzyme A biosynthesis; CoA from (R)-pantothenate: step 1/5. The sequence is that of Pantothenate kinase from Leifsonia xyli subsp. xyli (strain CTCB07).